We begin with the raw amino-acid sequence, 282 residues long: Dof zinc finger protein 4 (282 aa).

The segment at 45-99 (VKCPRCESTNTKFCYYNNYNLSQPRHFCKSCRRYWTKGGVLRNVPVGGGCRKTKR) adopts a Dof-type zinc-finger fold. C47, C50, C72, and C75 together coordinate Zn(2+). The segment at 89–161 (PVGGGCRKTK…TTPATPSSNT (73 aa)) is disordered. Composition is skewed to low complexity over residues 102-117 (SSSA…TAAT) and 125-161 (RASA…SSNT).

Its subcellular location is the nucleus. Functionally, transcription factor that may transactivate seed storage protein genes in developing seeds. The sequence is that of Dof zinc finger protein 4 from Oryza sativa subsp. japonica (Rice).